A 3744-amino-acid chain; its full sequence is SAGA complex/NuA4 acetyltransferase complex subunit TRA1 (3744 aa).

Serine 2 is modified (N-acetylserine). HEAT repeat units follow at residues 2–40 (SLTE…LLNS), 46–92 (FFLQ…NQTF), 94–131 (PYAM…SFKS), and 135–172 (DKLD…DLDS). The segment at 2–2598 (SLTEQIEQFA…KPYHTRQISS (2597 aa)) is HEAT. Serine 172 carries the post-translational modification Phosphoserine. Over residues 185-195 (FSKNDEEKDFP) the composition is skewed to basic and acidic residues. The interval 185–212 (FSKNDEEKDFPSKQSSTEPRFENSTSSN) is disordered. The segment covering 196–212 (SKQSSTEPRFENSTSSN) has biased composition (polar residues). HEAT repeat units follow at residues 247–284 (PEFT…ISTE), 319–357 (QDYV…ILST), and 437–477 (KLLL…RFKT). Residues 522–539 (LEPSDDDHLMPQPKKEDI) show a composition bias toward basic and acidic residues. Positions 522 to 546 (LEPSDDDHLMPQPKKEDINDSPDVE) are disordered. Phosphoserine is present on serine 542. 20 HEAT repeats span residues 588 to 628 (RTLM…VFSY), 734 to 771 (PNFA…LSFM), 779 to 821 (INEV…SIGG), 829 to 867 (RSIK…TVPV), 870 to 910 (SVLA…NLTA), 919 to 958 (PVID…RNRQ), 1074 to 1112 (NQEN…HFCL), 1188 to 1225 (SFIP…NVKS), 1283 to 1320 (KVLE…LTGI), 1369 to 1408 (TFNE…SEQL), 1435 to 1472 (NIRI…ENSK), 1476 to 1512 (ELLQ…LLIA), 1693 to 1734 (LKLK…RFTE), 1739 to 1776 (DQNP…SSNK), 1918 to 1955 (FPIK…VLHE), 2115 to 2155 (ELGL…LDSE), 2182 to 2219 (ENLP…AIKA), 2230 to 2267 (SPGK…FMNF), 2269 to 2307 (DNIV…ARIT), and 2536 to 2573 (IISS…SIPK). A head region spans residues 2599-3744 (RTNVINMLLD…RTDVNFMPWF (1146 aa)). Residues 2622-3177 (LVKYLAISYN…HFQLRTTKED (556 aa)) form the FAT domain. In terms of domain architecture, PI3K/PI4K catalytic spans 3374-3732 (FLPTVDFVRG…CIGSAVSPRN (359 aa)). Residues 3380–3386 (FVRGTHS) are G-loop. Residues 3563 to 3571 (MINNRTPHK) are catalytic loop. The tract at residues 3600 to 3625 (LKNHDLSLPPDSPIFHNNEPVPFRLT) is activation loop. An FATC domain is found at 3712–3744 (TPTVTTQFILDCIGSAVSPRNLARTDVNFMPWF).

This sequence belongs to the PI3/PI4-kinase family. TRA1 subfamily. Component of the 1.8 MDa SAGA (Spt-Ada-Gcn5 acetyltransferase) complex, which is composed of 19 subunits TRA1, SPT7, TAF5, NGG1/ADA3, SGF73, SPT20/ADA5, SPT8, TAF12, TAF6, HFI1/ADA1, UBP8, GCN5, ADA2, SPT3, SGF29, TAF10, TAF9, SGF11 and SUS1. The SAGA complex is composed of 4 modules, namely the HAT (histone acetyltransferase) module (GCN5, ADA2, NGG1/ADA3 and SGF29), the DUB (deubiquitinating) module (UBP8, SGF11, SGF73 and SUS1), the core or TAF (TBP-associated factor) module (TAF5, TAF6, TAF9, TAF10 and TAF12), and the Tra1 or SPT (Suppressor of Ty) module (TRA1, HFI1/ADA1, SPT3, SPT7, SPT8 and SPT20/ADA5). The Tra1/SPT module binds activators, the core module recruits TBP (TATA-binding protein), the HAT module contains the histone H3 acetyltransferase GCN5, and the DUB module comprises the histone H2B deubiquitinase UBP8. Also identified in an altered form of SAGA, named SALSA (SAGA altered, Spt8 absent) or SLIK (SAGA-like) complex, which contains a C-terminal truncated form of SPT7 and is missing SPT8. However, it has been shown that the SAGA and SAGA-like SALSA/SLIK transcriptional coactivators are structurally and biochemically equivalent. Component of the NuA4 acetyltransferase complex, which consists of the catalytic subunit ESA1 and the 12 non-catalytic subunits ACT1, ARP4, EAF1/VID21, SWC4/EAF2, EAF3, EAF5, EAF6, EAF7, EPL1, TRA1, YAF9 and YNG2. TRA1 is the scaffold subunit for binding to a variety of transcription activators or transcription factors to recruit NuA4 for targeted gene activation. Identified in the Ada.spt complex with NGG1/ADA3 and SPT7.

Its subcellular location is the nucleus. In terms of biological role, essential scaffold subunit of the transcription coactivator SAGA complex. SAGA acts as a general cofactor required for essentially all RNA polymerase II transcription. At the promoters, SAGA is required for transcription pre-initiation complex (PIC) recruitment. It influences RNA polymerase II transcriptional activity through different activities such as TBP interaction (via core/TAF module) and promoter selectivity, interaction with transcription activators (via Tra1/SPT module), and chromatin modification through histone acetylation (via HAT module) and deubiquitination (via DUB module). SAGA preferentially acetylates histones H3 (to form H3K9ac, H3K14ac, H3K18ac and H3K23ac) and H2B and deubiquitinates histone H2B. SAGA interacts with DNA via upstream activating sequences (UASs). Also identified in a modified version of SAGA named SALSA or SLIK. The cleavage of SPT7 and the absence of the SPT8 subunit in SLIK neither drive any major conformational differences in its structure compared with SAGA, nor significantly affect HAT, DUB, or DNA-binding activities. Component of the NuA4 histone H4/H2A acetyltransferase involved in transcription and DNA repair. The chain is SAGA complex/NuA4 acetyltransferase complex subunit TRA1 from Saccharomyces cerevisiae (strain ATCC 204508 / S288c) (Baker's yeast).